Consider the following 347-residue polypeptide: NADH-ubiquinone oxidoreductase chain 2 (347 aa).

10 helical membrane passes run 3 to 23, 25 to 45, 59 to 79, 111 to 131, 149 to 169, 178 to 198, 201 to 221, 242 to 262, 274 to 294, and 325 to 345; these read PIVFSTILTTAIMGTVIVMMS, HWLMVWIGFEMNLLAIIPILM, YFLTQATASMLLMSAIIINLM, FHFWVPEVTQGISLMSGLILL, INLDMLMTSALLSILVGGWGG, IMAYSSIAHMGWMTAILTYNP, TMLNMLIYIMMTLTTFMLLML, SLILIIMLSLGGLPPLSGFIP, NSIILPTSMAIMALLNLYFYL, and LLPTLIIMSTLLLPLMPTMSI.

The protein belongs to the complex I subunit 2 family. As to quaternary structure, core subunit of respiratory chain NADH dehydrogenase (Complex I) which is composed of 45 different subunits. Interacts with TMEM242.

The protein localises to the mitochondrion inner membrane. It carries out the reaction a ubiquinone + NADH + 5 H(+)(in) = a ubiquinol + NAD(+) + 4 H(+)(out). Its function is as follows. Core subunit of the mitochondrial membrane respiratory chain NADH dehydrogenase (Complex I) which catalyzes electron transfer from NADH through the respiratory chain, using ubiquinone as an electron acceptor. Essential for the catalytic activity and assembly of complex I. The chain is NADH-ubiquinone oxidoreductase chain 2 from Rhinoceros unicornis (Greater Indian rhinoceros).